The chain runs to 155 residues: Chromosomal passenger complex protein bir-1 (155 aa).

A BIR repeat occupies 20-87 (RLMTFKNFEY…KRDEPCEFVR (68 aa)). Zn(2+)-binding residues include Cys57, Cys60, His76, and Cys83.

The protein belongs to the IAP family. In terms of assembly, component of the CPC complex which consists of icp-1; csc-1; bir-1 and air-2. Within the complex, interacts with csc-1, icp-1 and air-2. Interacts with csc-1 in a zinc-dependent-manner; the interaction is direct. As to expression, expressed in oocytes and sperm.

The protein localises to the chromosome. It localises to the cytoplasm. It is found in the cytoskeleton. The protein resides in the spindle. Its subcellular location is the midbody. In terms of biological role, component of the chromosomal passenger complex (CPC), a complex that acts as a key regulator of chromosome segregation and cytokinesis. The CPC complex has essential functions at the centromere in ensuring correct chromosome condensation, alignment and segregation. In the complex, required to direct the Aurora B/air-2 kinase to chromosomes. Also functions in spindle midzone formation and in the formation of polar bodies during oogenesis. Required for the localization of the kinetochore component hcp-1 to chromosomes. Involved in the positive regulation of transcription. Involved in the transcriptional regulation of collagen genes. This Caenorhabditis elegans protein is Chromosomal passenger complex protein bir-1.